Reading from the N-terminus, the 416-residue chain is Serine/threonine-protein kinase 26 (416 aa).

Position 2 is an N-acetylalanine (Ala2). Ser4 carries the phosphoserine modification. Residues 24 to 274 (FTKLERIGKG…AKELLKHKFI (251 aa)) form the Protein kinase domain. ATP-binding positions include 30–38 (IGKGSFGEV) and Lys53. The active-site Proton acceptor is the Asp144. The residue at position 178 (Thr178) is a Phosphothreonine; by autocatalysis. The disordered stretch occupies residues 297–340 (EGHSDDESDSEGSDSESTSRENNTHPEWSFTTVRKKPDPKKVQN). Phosphoserine occurs at positions 300, 304, 306, 309, and 325. Thr327 and Thr328 each carry phosphothreonine.

Belongs to the protein kinase superfamily. STE Ser/Thr protein kinase family. STE20 subfamily. Homodimer. Interacts with PDCD10. Interacts with GOLGA2. Interacts with CTTNBP2NL. Interacts with RIPOR1 (via C-terminus); this interaction occurs in a PDCD10-dependent and Rho-independent manner. Interacts with PDCD10; this interaction is required for the association of STK26 with RIPOR1. Part of the core of STRIPAK complexes composed of PP2A catalytic and scaffolding subunits, the striatins (PP2A regulatory subunits), the striatin-associated proteins MOB4, STRIP1 and STRIP2, PDCD10 and members of the STE20 kinases, such as STK24 and STK26. Mg(2+) serves as cofactor.

It is found in the cytoplasm. It localises to the golgi apparatus. The catalysed reaction is L-seryl-[protein] + ATP = O-phospho-L-seryl-[protein] + ADP + H(+). It catalyses the reaction L-threonyl-[protein] + ATP = O-phospho-L-threonyl-[protein] + ADP + H(+). Its activity is regulated as follows. Interaction with Golgi matrix protein GOLGA2 leads to autophosphorylation on Thr-178, possibly as a consequence of stabilization of dimer formation. May also be activated by C-terminal cleavage. In terms of biological role, serine/threonine-protein kinase that acts as a mediator of cell growth. Modulates apoptosis. In association with STK24 negatively regulates Golgi reorientation in polarized cell migration upon RHO activation. Phosphorylates ATG4B at 'Ser-383', thereby increasing autophagic flux. Part of the striatin-interacting phosphatase and kinase (STRIPAK) complexes. STRIPAK complexes have critical roles in protein (de)phosphorylation and are regulators of multiple signaling pathways including Hippo, MAPK, nuclear receptor and cytoskeleton remodeling. Different types of STRIPAK complexes are involved in a variety of biological processes such as cell growth, differentiation, apoptosis, metabolism and immune regulation. The sequence is that of Serine/threonine-protein kinase 26 from Homo sapiens (Human).